We begin with the raw amino-acid sequence, 597 residues long: MLSLLSSEIFFSAIQYNLSLMEEVRLKKLQELREKGINPYPYRFEVTDFIGNIRKQYEEEPPENYKVRVKGVAKRVSRTENGYMVRLADEKGIEILVFTKEEGLKPKESYTFEGILKRVEGKLSLVEAVLTEEEGEEVYKIKEQFDYDPNFRPVSLAGRLVSMRSMGKAIFGHIQDLTGKIQIYLKKDVIGEEKLKFFNDYIDVGDIVGVRGKLFRTNTGELTVEVEEYQLLAKSLHPLPEKWHGLKDVEVRYRQRYLDLIANPEARRIFMLRTKLITEMRKFFEMHGFIEVETPILQPIASGANARPFVTYHNFLETELYLRIAPELYLKRLIVGGFPRVYEIGKNFRNESVDRTHNPEFTMVEFYAAYWDYHDLIKFTEDMFVYLLEKTLGTLKVKYGEWELDFSPPFKKVRYFDLLKEKTGKDKDFFLKDLEGLRKLAKELEIPDVERMTHAKLLDKVFEKVAEEDLIQPTFVIDFPKILSPLAKTHREDPDLVERFELIIARYEVANAYTELNDPFDQKERFLEQLKEKQMGDEEAMDMDEDFIRALEYGMPPTAGEGIGIDRLVMILANTDSIREVILFPQLKPEKKKKEAP.

Mg(2+)-binding residues include E501 and E508.

Belongs to the class-II aminoacyl-tRNA synthetase family. As to quaternary structure, homodimer. Mg(2+) is required as a cofactor.

It localises to the cytoplasm. It carries out the reaction tRNA(Lys) + L-lysine + ATP = L-lysyl-tRNA(Lys) + AMP + diphosphate. The sequence is that of Lysine--tRNA ligase (lysS) from Aquifex aeolicus (strain VF5).